The following is a 1713-amino-acid chain: Serine/threonine-protein kinase MRCK beta (1713 aa).

The Protein kinase domain maps to Phe76–Phe342. ATP is bound by residues Ile82–Val90 and Lys105. Residue Asp200 is the Proton acceptor of the active site. 2 positions are modified to phosphoserine; by autocatalysis: Ser221 and Ser233. Phosphothreonine; by autocatalysis is present on Thr239. In terms of domain architecture, AGC-kinase C-terminal spans Glu343 to Gly413. The residue at position 423 (Thr423) is a Phosphothreonine. Residues Leu434–His649 are a coiled coil. At Arg671 the chain carries Omega-N-methylarginine. Coiled-coil stretches lie at residues Gln681–Glu815 and Glu878–Asp939. Ser927 carries the phosphoserine modification. The residue at position 954 (Tyr954) is a Phosphotyrosine. Residues Ala971–Glu994 are compositionally biased toward polar residues. The disordered stretch occupies residues Ala971–Pro1022. The Phorbol-ester/DAG-type zinc-finger motif lies at Ala1026–Cys1076. A PH domain is found at Gly1096 to Ala1215. A CNH domain is found at Ile1241–Asn1515. Positions Ile1585 to Gly1598 constitute a CRIB domain. A disordered region spans residues Thr1616–Ala1713. Over residues Asp1666–Lys1677 the composition is skewed to basic and acidic residues. Phosphoserine occurs at positions 1682, 1684, 1688, 1692, and 1695.

Belongs to the protein kinase superfamily. AGC Ser/Thr protein kinase family. DMPK subfamily. As to quaternary structure, homodimer and homotetramer via the coiled coil regions. Interacts tightly with GTP-bound but not GDP-bound CDC42. Interacts with TJP1; this interaction requires the presence of catalytically active CDC42. Forms a tripartite complex with MYO18A and LURAP1 with the latter acting as an adapter connecting CDC42BPB and MYO18A. LURAP1 binding results in activation of CDC42BPB by abolition of its negative autoregulation. Interacts with STRIP1, STRN3 and SIKE1. Interacts with CPNE4 (via VWFA domain). Interacts with LURAP1. Interacts (via AGC-kinase C-terminal domain) with FAM89B/LRAP25 (via LRR repeat). Forms a tripartite complex with FAM89B/LRAP25 and LIMK1. Mg(2+) is required as a cofactor. In terms of processing, proteolytically cleaved by caspases upon apoptosis induction.

The protein localises to the cytoplasm. It localises to the cell membrane. It is found in the cell junction. Its subcellular location is the cell projection. The protein resides in the lamellipodium. It catalyses the reaction L-seryl-[protein] + ATP = O-phospho-L-seryl-[protein] + ADP + H(+). The enzyme catalyses L-threonyl-[protein] + ATP = O-phospho-L-threonyl-[protein] + ADP + H(+). With respect to regulation, maintained in an inactive, closed conformation by an interaction between the kinase domain and the negative autoregulatory C-terminal coiled-coil region. Agonist binding to the phorbol ester binding site disrupts this, releasing the kinase domain to allow N-terminus-mediated dimerization and kinase activation by transautophosphorylation. Inhibited by chelerythrine chloride. In terms of biological role, serine/threonine-protein kinase which is an important downstream effector of CDC42 and plays a role in the regulation of cytoskeleton reorganization and cell migration. Regulates actin cytoskeletal reorganization via phosphorylation of PPP1R12C and MYL9/MLC2. In concert with MYO18A and LURAP1, is involved in modulating lamellar actomyosin retrograde flow that is crucial to cell protrusion and migration. Phosphorylates PPP1R12A. In concert with FAM89B/LRAP25 mediates the targeting of LIMK1 to the lamellipodium resulting in its activation and subsequent phosphorylation of CFL1 which is important for lamellipodial F-actin regulation. The sequence is that of Serine/threonine-protein kinase MRCK beta from Mus musculus (Mouse).